Reading from the N-terminus, the 324-residue chain is Methionyl-tRNA formyltransferase (324 aa).

Position 114–117 (114–117) interacts with (6S)-5,6,7,8-tetrahydrofolate; the sequence is SLLP.

The protein belongs to the Fmt family.

The enzyme catalyses L-methionyl-tRNA(fMet) + (6R)-10-formyltetrahydrofolate = N-formyl-L-methionyl-tRNA(fMet) + (6S)-5,6,7,8-tetrahydrofolate + H(+). Functionally, attaches a formyl group to the free amino group of methionyl-tRNA(fMet). The formyl group appears to play a dual role in the initiator identity of N-formylmethionyl-tRNA by promoting its recognition by IF2 and preventing the misappropriation of this tRNA by the elongation apparatus. In Azobacteroides pseudotrichonymphae genomovar. CFP2, this protein is Methionyl-tRNA formyltransferase.